Consider the following 357-residue polypeptide: Chorismate synthase (357 aa).

Arg47 is a binding site for NADP(+). FMN contacts are provided by residues 123-125 (RSS), Gly281, 296-300 (KPTSS), and Arg324.

This sequence belongs to the chorismate synthase family. In terms of assembly, homotetramer. It depends on FMNH2 as a cofactor.

The catalysed reaction is 5-O-(1-carboxyvinyl)-3-phosphoshikimate = chorismate + phosphate. It participates in metabolic intermediate biosynthesis; chorismate biosynthesis; chorismate from D-erythrose 4-phosphate and phosphoenolpyruvate: step 7/7. Its function is as follows. Catalyzes the anti-1,4-elimination of the C-3 phosphate and the C-6 proR hydrogen from 5-enolpyruvylshikimate-3-phosphate (EPSP) to yield chorismate, which is the branch point compound that serves as the starting substrate for the three terminal pathways of aromatic amino acid biosynthesis. This reaction introduces a second double bond into the aromatic ring system. The chain is Chorismate synthase from Chlamydia muridarum (strain MoPn / Nigg).